A 414-amino-acid polypeptide reads, in one-letter code: Histidine--tRNA ligase (414 aa).

The protein belongs to the class-II aminoacyl-tRNA synthetase family. In terms of assembly, homodimer.

The protein resides in the cytoplasm. The enzyme catalyses tRNA(His) + L-histidine + ATP = L-histidyl-tRNA(His) + AMP + diphosphate + H(+). This chain is Histidine--tRNA ligase, found in Ehrlichia ruminantium (strain Gardel).